Consider the following 442-residue polypeptide: 3-phosphoshikimate 1-carboxyvinyltransferase (442 aa).

Residues Lys-25, Ser-26, and Arg-30 each coordinate 3-phosphoshikimate. A phosphoenolpyruvate-binding site is contributed by Lys-25. Residues Gly-96 and Arg-124 each contribute to the phosphoenolpyruvate site. 6 residues coordinate 3-phosphoshikimate: Ser-171, Ser-172, Gln-173, Ser-203, Asp-325, and Lys-352. Gln-173 contacts phosphoenolpyruvate. Asp-325 acts as the Proton acceptor in catalysis. Arg-356, Arg-400, and Lys-425 together coordinate phosphoenolpyruvate.

This sequence belongs to the EPSP synthase family. In terms of assembly, monomer.

It localises to the cytoplasm. It catalyses the reaction 3-phosphoshikimate + phosphoenolpyruvate = 5-O-(1-carboxyvinyl)-3-phosphoshikimate + phosphate. Its pathway is metabolic intermediate biosynthesis; chorismate biosynthesis; chorismate from D-erythrose 4-phosphate and phosphoenolpyruvate: step 6/7. Its function is as follows. Catalyzes the transfer of the enolpyruvyl moiety of phosphoenolpyruvate (PEP) to the 5-hydroxyl of shikimate-3-phosphate (S3P) to produce enolpyruvyl shikimate-3-phosphate and inorganic phosphate. The sequence is that of 3-phosphoshikimate 1-carboxyvinyltransferase from Bordetella parapertussis (strain 12822 / ATCC BAA-587 / NCTC 13253).